The following is a 473-amino-acid chain: Hyaluronidase-2 (473 aa).

The first 20 residues, 1–20 (MRAGLGPIITLALVLEVAWA), serve as a signal peptide directing secretion. Intrachain disulfides connect C47-C340 and C211-C227. Residues N74 and N103 are each glycosylated (N-linked (GlcNAc...) asparagine). The Proton donor role is filled by E135. Residue N357 is glycosylated (N-linked (GlcNAc...) asparagine). In terms of domain architecture, EGF-like spans 361-439 (ATQYCSWTQC…YLGWGGEQCQ (79 aa)). Cystine bridges form between C365–C376, C370–C427, and C429–C438. Residue N390 is glycosylated (N-linked (GlcNAc...) asparagine). The GPI-anchor amidated asparagine; alternate moiety is linked to residue N448. The N-linked (GlcNAc...) asparagine; alternate glycan is linked to N448. A propeptide spans 449-473 (ASRAWAGSHLTSLLGLVAVALTWTL) (removed in mature form).

This sequence belongs to the glycosyl hydrolase 56 family. Interacts with MST1R. As to expression, widely expressed, with highest expression levels in kidney, lung and liver (at protein level).

The protein resides in the cell membrane. It catalyses the reaction Random hydrolysis of (1-&gt;4)-linkages between N-acetyl-beta-D-glucosamine and D-glucuronate residues in hyaluronate.. Functionally, catalyzes hyaluronan degradation into small fragments that are endocytosed and degraded in lysosomes by HYAL1 and exoglycosidases. Essential for the breakdown of extracellular matrix hyaluronan. The chain is Hyaluronidase-2 (Hyal2) from Mus musculus (Mouse).